The primary structure comprises 64 residues: Small ribosomal subunit protein bS21 (64 aa).

This sequence belongs to the bacterial ribosomal protein bS21 family.

The sequence is that of Small ribosomal subunit protein bS21 from Amoebophilus asiaticus (strain 5a2).